Here is a 216-residue protein sequence, read N- to C-terminus: Protein Syd (216 aa).

This sequence belongs to the Syd family.

Its subcellular location is the cell inner membrane. Functionally, interacts with the SecY protein in vivo. May bind preferentially to an uncomplexed state of SecY, thus functioning either as a chelating agent for excess SecY in the cell or as a regulatory factor that negatively controls the translocase function. This Shewanella sp. (strain MR-4) protein is Protein Syd.